A 163-amino-acid polypeptide reads, in one-letter code: NADH-quinone oxidoreductase subunit I (163 aa).

2 4Fe-4S ferredoxin-type domains span residues 53-83 (LRRYPNGEERCIACKLCEAICPAQAITIEAG) and 94-123 (VRYDIDMVKCIYCGFCQEACPVDAIVEGPN). [4Fe-4S] cluster contacts are provided by Cys-63, Cys-66, Cys-69, Cys-73, Cys-103, Cys-106, Cys-109, and Cys-113.

The protein belongs to the complex I 23 kDa subunit family. In terms of assembly, NDH-1 is composed of 14 different subunits. Subunits NuoA, H, J, K, L, M, N constitute the membrane sector of the complex. The cofactor is [4Fe-4S] cluster.

It is found in the cell inner membrane. It catalyses the reaction a quinone + NADH + 5 H(+)(in) = a quinol + NAD(+) + 4 H(+)(out). Its function is as follows. NDH-1 shuttles electrons from NADH, via FMN and iron-sulfur (Fe-S) centers, to quinones in the respiratory chain. The immediate electron acceptor for the enzyme in this species is believed to be ubiquinone. Couples the redox reaction to proton translocation (for every two electrons transferred, four hydrogen ions are translocated across the cytoplasmic membrane), and thus conserves the redox energy in a proton gradient. This is NADH-quinone oxidoreductase subunit I from Agrobacterium fabrum (strain C58 / ATCC 33970) (Agrobacterium tumefaciens (strain C58)).